A 335-amino-acid chain; its full sequence is Glucose-dependent insulinotropic receptor (335 aa).

The Extracellular segment spans residues 1–12 (MESSFSFGVILA). Residues 13 to 33 (VLASLIIATNTLVAVAVLLLI) traverse the membrane as a helical segment. Residues 34–37 (HKND) lie on the Cytoplasmic side of the membrane. A helical membrane pass occupies residues 38 to 58 (GVSLCFTLNLAVADTLIGVAI). Topologically, residues 59–81 (SGLLTDQLSSPSRPTQKTLCSLR) are extracellular. The helical transmembrane segment at 82–102 (MAFVTSSAAASVLTVMLITFD) threads the bilayer. Residues 103 to 125 (RYLAIKQPFRYLKIMSGFVAGAC) are Cytoplasmic-facing. Residues 126 to 146 (IAGLWLVSYLIGFLPLGIPMF) traverse the membrane as a helical segment. Topologically, residues 147-164 (QQTAYKGQCSFFAVFHPH) are extracellular. Residues 165–185 (FVLTLSCVGFFPAMLLFVFFY) form a helical membrane-spanning segment. Residues 186 to 226 (CDMLKIASMHSQQIRKMEHAGAMAGGYRSPRTPSDFKALRT) are Cytoplasmic-facing. A helical membrane pass occupies residues 227–247 (VSVLIGSFALSWTPFLITGIV). Residues 248-262 (QVACQECHLYLVLER) lie on the Extracellular side of the membrane. The helical transmembrane segment at 263-283 (YLWLLGVGNSLLNPLIYAYWQ) threads the bilayer. Over 284 to 335 (KEVRLQLYHMALGVKKVLTSFLLFLSARNCGPERPRESSCHIVTISSSEFDG) the chain is Cytoplasmic.

The protein belongs to the G-protein coupled receptor 1 family. In terms of tissue distribution, predominantly expressed in the pancreas, especially in the islets.

It localises to the cell membrane. In terms of biological role, receptor for the endogenous fatty-acid ethanolamide oleoylethanolamide (OEA) and lysophosphatidylcholine (LPC). Functions as a glucose-dependent insulinotropic receptor. The activity of this receptor is mediated by G proteins which activate adenylate cyclase. Seems to act through a G(s) mediated pathway. In Homo sapiens (Human), this protein is Glucose-dependent insulinotropic receptor (GPR119).